The chain runs to 468 residues: N-acetyltransferase SLI1 (468 aa).

It localises to the endoplasmic reticulum. Its function is as follows. Confers resistance to the sphingolipid biosynthesis inhibitor drug myriocin (ISP-1). Inactivates ISP-1 by converting it into N-acetyl-myriocin. Cooperates with YPK1 in mediating resistance to myriocin. The polypeptide is N-acetyltransferase SLI1 (SLI1) (Saccharomyces cerevisiae (strain ATCC 204508 / S288c) (Baker's yeast)).